The sequence spans 336 residues: Major histocompatibility complex class I-related protein 1 (336 aa).

Residues 1-18 (MMLLLPLIIVLMMKLSDA) form the signal peptide. The segment at 19 to 105 (RTHSLRYFRL…KQLQHHYNHS (87 aa)) is alpha-1. Residues 19-197 (RTHSLRYFRL…EYGKDALQRT (179 aa)) are antigen-binding cleft. The Extracellular portion of the chain corresponds to 19-298 (RTHSLRYFRL…QESETILLVV (280 aa)). Tyr25 and Arg27 together coordinate 8-(9H-purin-6-yl)-2-oxa-8-azabicyclo[3.3.1]nona-3,6-diene-4,6-dicarbaldehyde. 5-(2-oxoethylideneamino)-6-(D-ribitylamino)uracil contacts are provided by Arg27, Ser42, and Lys61. Residues Arg27, Ser42, and Lys61 each coordinate 5-(2-oxopropylideneamino)-6-(D-ribitylamino)uracil. Positions 27, 42, and 61 each coordinate 7-hydroxy-6-methyl-8-(1-D-ribityl)lumazine. The 8-(9H-purin-6-yl)-2-oxa-8-azabicyclo[3.3.1]nona-3,6-diene-4,6-dicarbaldehyde site is built by Lys61 and His76. 2-amino-4-oxopteridine-6-carbaldehyde is bound at residue Lys61. Lys61 provides a ligand contact to pyridoxal. N-linked (GlcNAc...) asparagine glycosylation occurs at Asn103. Residues 106–197 (GFHTYQRMIG…EYGKDALQRT (92 aa)) are alpha-2. Arg112 provides a ligand contact to 8-(9H-purin-6-yl)-2-oxa-8-azabicyclo[3.3.1]nona-3,6-diene-4,6-dicarbaldehyde. 5-(2-oxoethylideneamino)-6-(D-ribitylamino)uracil is bound by residues Arg112, Tyr170, and Gln171. Positions 112, 170, and 171 each coordinate 5-(2-oxopropylideneamino)-6-(D-ribitylamino)uracil. 7-hydroxy-6-methyl-8-(1-D-ribityl)lumazine contacts are provided by Arg112, Tyr170, and Gln171. Disulfide bonds link Cys116-Cys179 and Cys218-Cys274. An alpha-3 region spans residues 198-289 (EPPKVRVNHK…GVHMVLQGFQ (92 aa)). Positions 200–295 (PKVRVNHKET…QGFQESETIL (96 aa)) constitute an Ig-like C1-type domain. The segment at 290–298 (ESETILLVV) is connecting peptide. A helical membrane pass occupies residues 299 to 319 (KAVGFIVLAIALAGVGILAWR). Topologically, residues 320 to 336 (KRPRGKNKVICLSTPEH) are cytoplasmic.

It belongs to the MHC class I family. As to quaternary structure, heterotrimer that consists of MR1, B2M and metabolite antigen. Major classes of metabolite ligands presented by MR1 include riboflavin-related antigens, pyrimidines and ribityl lumazines, nucleobase adducts and folate derivatives. Forms reversible covalent Schiff base complexes with microbial pyrimidine-based metabolite, which serves as a molecular switch triggering complete folding, stable association with B2M and translocation of the ternary complex from endoplasmic reticulum to the plasma membrane. Alternatively, forms non-Schiff base complexes with ribityl lumazines. On antigen-presenting cells, the ternary complex interacts with TCR on MR1-restricted T cells. Interacts with TAPBP and TAPBPL chaperones in the endoplasmic reticulum. TAPBP associated or not with MHC class I peptide loading complex binds ligand-free MR1 or MR1-B2M complex, providing for stable MR1 pools ready for metabolite antigen processing. TAPBPL interacts with MR1 in a ligand-independent way; this interaction may stabilize MR1 pool and facilitate ligand loading and dissociation. Structurally, MR1-B2M heterodimer adopts a topology similar to classical MHC class I molecules, with alpha-1 and alpha-2 domains of MR1 forming the antigen-binding cleft composed of two alpha-helices resting on a floor of 7-stranded anti-parallel beta-pleated sheet. MR1-B2M heterodimer (via alpha-helices) interacts with TCR (via CDR domains). In terms of processing, N-glycosylated.

The protein localises to the cell membrane. It localises to the endoplasmic reticulum membrane. Its subcellular location is the golgi apparatus membrane. It is found in the early endosome membrane. The protein resides in the late endosome membrane. In terms of biological role, antigen-presenting molecule specialized in displaying microbial pyrimidine-based metabolites to alpha-beta T cell receptors (TCR) on innate-type mucosal-associated invariant T (MAIT) cells. In complex with B2M preferentially presents riboflavin-derived metabolites to semi-invariant TCRs on MAIT cells, guiding immune surveillance of the microbial metabolome at mucosal epithelial barriers. Signature pyrimidine-based microbial antigens are generated via non-enzymatic condensation of metabolite intermediates of the riboflavin pathway with by-products arising from other metabolic pathways such as glycolysis. Typical potent antigenic metabolites are 5-(2-oxoethylideneamino)-6-D-ribitylaminouracil (5-OE-RU) and 5-(2-oxopropylideneamino)-6-D-ribitylaminouracil (5-OP-RU), products of condensation of 5-amino-6-D-ribityaminouracil (5-A-RU) with glyoxal or methylglyoxal by-products, respectively. May present microbial antigens to various MAIT cell subsets, providing for unique recognition of diverse microbes, including pathogens that do not synthesize riboflavin. Upon antigen recognition, elicits rapid innate-type MAIT cell activation to eliminate pathogenic microbes by directly killing infected cells. During T cell development, drives thymic selection and post-thymic terminal differentiation of MAIT cells in a process dependent on commensal microflora. Acts as an immune sensor of cancer cell metabolome. May present a tumor-specific or -associated metabolite essential for cancer cell survival to a pan-cancer TCR on a non-MAIT CD8-positive T cell clone, triggering T cell-mediated killing of a wide range of cancer cell types. May present tumor-enriched pyridoxal and pyridoxal 5'-phosphate antigens, enabling preferential recognition of cancer cells. Presents nucleobase carbonyl adducts generated during oxidative stress. Captures M3Ade, a nucleobase adduct composed of one adenine modified by a malondialdehyde trimer, for recognition by MR1-restricted T cell clones expressing a polyclonal TCR repertoire. The sequence is that of Major histocompatibility complex class I-related protein 1 from Bos taurus (Bovine).